A 104-amino-acid chain; its full sequence is Large ribosomal subunit protein bL21 (104 aa).

The protein belongs to the bacterial ribosomal protein bL21 family. As to quaternary structure, part of the 50S ribosomal subunit. Contacts protein L20.

This protein binds to 23S rRNA in the presence of protein L20. The polypeptide is Large ribosomal subunit protein bL21 (Helicobacter pylori (strain HPAG1)).